Consider the following 414-residue polypeptide: Gamma-glutamyl phosphate reductase (414 aa).

The protein belongs to the gamma-glutamyl phosphate reductase family.

The protein localises to the cytoplasm. It catalyses the reaction L-glutamate 5-semialdehyde + phosphate + NADP(+) = L-glutamyl 5-phosphate + NADPH + H(+). It participates in amino-acid biosynthesis; L-proline biosynthesis; L-glutamate 5-semialdehyde from L-glutamate: step 2/2. In terms of biological role, catalyzes the NADPH-dependent reduction of L-glutamate 5-phosphate into L-glutamate 5-semialdehyde and phosphate. The product spontaneously undergoes cyclization to form 1-pyrroline-5-carboxylate. This Xanthomonas axonopodis pv. citri (strain 306) protein is Gamma-glutamyl phosphate reductase.